A 385-amino-acid polypeptide reads, in one-letter code: Sensor histidine kinase Hik2 (385 aa).

Residues alanine 11–alanine 131 form the GAF domain. Cysteine 13 contacts [3Fe-4S] cluster. A DHp domain, may sense NaCl region spans residues serine 142–glutamate 270. In terms of domain architecture, Histidine kinase spans aspartate 158–methionine 381. Histidine 161 is subject to Phosphohistidine; by autocatalysis.

It belongs to the chloroplast sensor kinase protein family. In terms of assembly, hexamers; upon treatment with 0.5 M NaCl only tetramers are seen. The tetramers are probably inactive. Requires [3Fe-4S] cluster as cofactor. In terms of processing, autophosphorylates, possibly on His-161.

The catalysed reaction is ATP + protein L-histidine = ADP + protein N-phospho-L-histidine.. Its function is as follows. Member of 2 two-component regulatory system(s) Hik2/Rre1 and Hik2/RppA. Transduces PQ (plastoquinone) redox signals to photosystem gene expression machinery during the adjustment of photosystem stoichiometry. Reduced PQ suppresses its autophosphorylation activity (i.e. kinase activity is higher under oxidizing conditions). As part of a two-component regulatory system with Rre1, controls expression of sigB and several other genes in response to hyperosmotic stress. May transfer phosphate to RppA in a possible Hik2/RppA two-component system. This Thermosynechococcus vestitus (strain NIES-2133 / IAM M-273 / BP-1) protein is Sensor histidine kinase Hik2.